We begin with the raw amino-acid sequence, 135 residues long: MSSSNNTVVYWGTGRRKTSVARVRLVPGNGTITINGRPGDNYLNYNPAYLAAVKAPLQTLGLSTEYDVLVNVRGGGLTGQADAIKQGAARALCELSVDNRKPLKTEGHLSRDPRAKERRKYGLKKARKAPQFSKR.

Over residues 102–115 (PLKTEGHLSRDPRA) the composition is skewed to basic and acidic residues. Residues 102–135 (PLKTEGHLSRDPRAKERRKYGLKKARKAPQFSKR) form a disordered region. Basic residues predominate over residues 116–135 (KERRKYGLKKARKAPQFSKR).

This sequence belongs to the universal ribosomal protein uS9 family.

The polypeptide is Small ribosomal subunit protein uS9 (Synechococcus sp. (strain CC9311)).